We begin with the raw amino-acid sequence, 170 residues long: Peptide deformylase (170 aa).

Fe cation contacts are provided by Cys-91 and His-133. Glu-134 is a catalytic residue. Fe cation is bound at residue His-137.

The protein belongs to the polypeptide deformylase family. Fe(2+) serves as cofactor.

The enzyme catalyses N-terminal N-formyl-L-methionyl-[peptide] + H2O = N-terminal L-methionyl-[peptide] + formate. Its function is as follows. Removes the formyl group from the N-terminal Met of newly synthesized proteins. Requires at least a dipeptide for an efficient rate of reaction. N-terminal L-methionine is a prerequisite for activity but the enzyme has broad specificity at other positions. This chain is Peptide deformylase, found in Actinobacillus pleuropneumoniae serotype 7 (strain AP76).